Consider the following 206-residue polypeptide: Protein GrpE (206 aa).

The segment covering 1 to 10 (MTDPDLHQND) has biased composition (basic and acidic residues). The disordered stretch occupies residues 1–38 (MTDPDLHQNDPENPAQASEPVVSKPYIMPDDPETGSAE).

It belongs to the GrpE family. In terms of assembly, homodimer.

It localises to the cytoplasm. In terms of biological role, participates actively in the response to hyperosmotic and heat shock by preventing the aggregation of stress-denatured proteins, in association with DnaK and GrpE. It is the nucleotide exchange factor for DnaK and may function as a thermosensor. Unfolded proteins bind initially to DnaJ; upon interaction with the DnaJ-bound protein, DnaK hydrolyzes its bound ATP, resulting in the formation of a stable complex. GrpE releases ADP from DnaK; ATP binding to DnaK triggers the release of the substrate protein, thus completing the reaction cycle. Several rounds of ATP-dependent interactions between DnaJ, DnaK and GrpE are required for fully efficient folding. This Bradyrhizobium sp. (strain ORS 278) protein is Protein GrpE.